Reading from the N-terminus, the 158-residue chain is N5-carboxyaminoimidazole ribonucleotide mutase (158 aa).

Positions 10, 13, and 40 each coordinate substrate.

This sequence belongs to the AIR carboxylase family. Class I subfamily.

The enzyme catalyses 5-carboxyamino-1-(5-phospho-D-ribosyl)imidazole + H(+) = 5-amino-1-(5-phospho-D-ribosyl)imidazole-4-carboxylate. The protein operates within purine metabolism; IMP biosynthesis via de novo pathway; 5-amino-1-(5-phospho-D-ribosyl)imidazole-4-carboxylate from 5-amino-1-(5-phospho-D-ribosyl)imidazole (N5-CAIR route): step 2/2. Functionally, catalyzes the conversion of N5-carboxyaminoimidazole ribonucleotide (N5-CAIR) to 4-carboxy-5-aminoimidazole ribonucleotide (CAIR). The protein is N5-carboxyaminoimidazole ribonucleotide mutase of Saccharolobus solfataricus (strain ATCC 35092 / DSM 1617 / JCM 11322 / P2) (Sulfolobus solfataricus).